A 518-amino-acid chain; its full sequence is Putative BTB/POZ domain and WD-repeat protein R731 (518 aa).

A BTB domain is found at 22-92 (TDCQLHLTDS…FYGFPLEEPN (71 aa)). The tract at residues 224 to 246 (NHEESSDDEVNDDEDTDNEDTDD) is disordered. Residues 228-246 (SSDDEVNDDEDTDNEDTDD) are compositionally biased toward acidic residues. WD repeat units follow at residues 391 to 430 (NHSTTINHILYSPKSKYFIFCDENSIIYVYSTKDNYSLIK) and 437 to 475 (FLKFGVKDFEFMTSKIIVAIDIKGKICIWNIETEQIIQN).

Belongs to the mimivirus BTB/WD family.

The polypeptide is Putative BTB/POZ domain and WD-repeat protein R731 (Acanthamoeba polyphaga (Amoeba)).